Reading from the N-terminus, the 120-residue chain is Large ribosomal subunit protein eL18 (120 aa).

This sequence belongs to the eukaryotic ribosomal protein eL18 family.

In Thermococcus onnurineus (strain NA1), this protein is Large ribosomal subunit protein eL18.